The primary structure comprises 391 residues: 1-deoxy-D-xylulose 5-phosphate reductoisomerase (391 aa).

N109 lines the NADPH pocket. K110 provides a ligand contact to 1-deoxy-D-xylulose 5-phosphate. An NADPH-binding site is contributed by E111. Residue D135 coordinates Mn(2+). 4 residues coordinate 1-deoxy-D-xylulose 5-phosphate: S136, E137, S171, and H194. E137 contributes to the Mn(2+) binding site. G200 provides a ligand contact to NADPH. 4 residues coordinate 1-deoxy-D-xylulose 5-phosphate: S207, N212, R213, and E216. E216 contacts Mn(2+).

This sequence belongs to the DXR family. Homodimer. It depends on Mg(2+) as a cofactor. Mn(2+) serves as cofactor.

The enzyme catalyses 2-C-methyl-D-erythritol 4-phosphate + NADP(+) = 1-deoxy-D-xylulose 5-phosphate + NADPH + H(+). It functions in the pathway isoprenoid biosynthesis; isopentenyl diphosphate biosynthesis via DXP pathway; isopentenyl diphosphate from 1-deoxy-D-xylulose 5-phosphate: step 1/6. Catalyzes the NADPH-dependent rearrangement and reduction of 1-deoxy-D-xylulose-5-phosphate (DXP) to 2-C-methyl-D-erythritol 4-phosphate (MEP). This chain is 1-deoxy-D-xylulose 5-phosphate reductoisomerase, found in Blochmanniella floridana.